We begin with the raw amino-acid sequence, 158 residues long: Endoribonuclease YbeY (158 aa).

The Zn(2+) site is built by His-119, His-123, and His-129.

It belongs to the endoribonuclease YbeY family. Zn(2+) serves as cofactor.

The protein resides in the cytoplasm. In terms of biological role, single strand-specific metallo-endoribonuclease involved in late-stage 70S ribosome quality control and in maturation of the 3' terminus of the 16S rRNA. The sequence is that of Endoribonuclease YbeY from Acinetobacter baumannii (strain ACICU).